A 205-amino-acid polypeptide reads, in one-letter code: Probable thymidylate kinase (205 aa).

7–14 (GIDGSGKS) provides a ligand contact to ATP.

It belongs to the thymidylate kinase family.

The catalysed reaction is dTMP + ATP = dTDP + ADP. This Methanoculleus marisnigri (strain ATCC 35101 / DSM 1498 / JR1) protein is Probable thymidylate kinase.